The following is a 149-amino-acid chain: Glutamate mutase sigma subunit (149 aa).

Residues 3–140 (KATLVIGVIG…AHDINQRHDV (138 aa)) form the B12-binding domain. Residues 13–17 (ADCHA), His16, 61–63 (SSI), and 93–97 (NLVVG) each bind adenosylcob(III)alamin.

Belongs to the methylaspartate mutase GlmS subunit family. In terms of assembly, heterotetramer composed of 2 epsilon subunits (GlmE) and 2 sigma subunits (GlmS). GlmE exists as a homodimer and GlmS as a monomer. The cofactor is adenosylcob(III)alamin.

The catalysed reaction is (2S,3S)-3-methyl-L-aspartate = L-glutamate. It functions in the pathway amino-acid degradation; L-glutamate degradation via mesaconate pathway; acetate and pyruvate from L-glutamate: step 1/4. Catalyzes the carbon skeleton rearrangement of L-glutamate to L-threo-3-methylaspartate ((2S,3S)-3-methylaspartate). The protein is Glutamate mutase sigma subunit of Escherichia coli O157:H7.